The chain runs to 245 residues: Eukaryotic translation initiation factor 6 (245 aa).

Tyr-113 is subject to Phosphotyrosine. The residue at position 165 (Thr-165) is a Phosphothreonine. At Ser-166 the chain carries Phosphoserine. Ser-174 and Ser-175 each carry phosphoserine; by CK1. Ser-235 is subject to Phosphoserine; by PKC. Ser-239 and Ser-243 each carry phosphoserine.

This sequence belongs to the eIF-6 family. In terms of assembly, monomer. Associates with the 60S ribosomal subunit. Interacts with RACK1. Interacts with DICER1, AGO2, TARBP2, MOV10 and RPL7A; they form a large RNA-induced silencing complex (RISC). Phosphorylation at Ser-174 and Ser-175 by CSNK1D/CK1 promotes nuclear export. Post-translationally, ufmylated by UFL1.

It localises to the cytoplasm. The protein resides in the nucleus. Its subcellular location is the nucleolus. Functionally, binds to the 60S ribosomal subunit and prevents its association with the 40S ribosomal subunit to form the 80S initiation complex in the cytoplasm. Behaves as a stimulatory translation initiation factor downstream insulin/growth factors. Is also involved in ribosome biogenesis. Associates with pre-60S subunits in the nucleus and is involved in its nuclear export. Cytoplasmic release of TIF6 from 60S subunits and nuclear relocalization is promoted by a RACK1 (RACK1)-dependent protein kinase C activity. In tissues responsive to insulin, controls fatty acid synthesis and glycolysis by exerting translational control of adipogenic transcription factors such as CEBPB, CEBPD and ATF4 that have G/C rich or uORF in their 5'UTR. Required for ROS-dependent megakaryocyte maturation and platelets formation, controls the expression of mitochondrial respiratory chain genes involved in reactive oxygen species (ROS) synthesis. Involved in miRNA-mediated gene silencing by the RNA-induced silencing complex (RISC). Required for both miRNA-mediated translational repression and miRNA-mediated cleavage of complementary mRNAs by RISC. Modulates cell cycle progression and global translation of pre-B cells, its activation seems to be rate-limiting in tumorigenesis and tumor growth. In Bos taurus (Bovine), this protein is Eukaryotic translation initiation factor 6.